A 444-amino-acid chain; its full sequence is Deoxyguanosinetriphosphate triphosphohydrolase-like protein (444 aa).

Residues 59–250 (RLTHSLEVSQ…MELADDIAYA (192 aa)) form the HD domain.

It belongs to the dGTPase family. Type 2 subfamily.

The chain is Deoxyguanosinetriphosphate triphosphohydrolase-like protein from Shewanella halifaxensis (strain HAW-EB4).